The following is a 546-amino-acid chain: Chaperonin GroEL (546 aa).

Residues 29-32 (TLGP), lysine 50, 86-90 (DGTTT), glycine 414, and aspartate 495 each bind ATP. A disordered region spans residues 526-546 (AKEGAPAGGGMPDMGGMGGMM). Positions 531 to 546 (PAGGGMPDMGGMGGMM) are enriched in gly residues.

It belongs to the chaperonin (HSP60) family. Forms a cylinder of 14 subunits composed of two heptameric rings stacked back-to-back. Interacts with the co-chaperonin GroES.

It localises to the cytoplasm. The catalysed reaction is ATP + H2O + a folded polypeptide = ADP + phosphate + an unfolded polypeptide.. Functionally, together with its co-chaperonin GroES, plays an essential role in assisting protein folding. The GroEL-GroES system forms a nano-cage that allows encapsulation of the non-native substrate proteins and provides a physical environment optimized to promote and accelerate protein folding. In Jannaschia sp. (strain CCS1), this protein is Chaperonin GroEL.